Consider the following 121-residue polypeptide: Small ribosomal subunit protein uS13 (121 aa).

A disordered region spans residues 92–121; it reads RRGLPVRGQKTKNNSRTRKGPRKTMANKKK.

The protein belongs to the universal ribosomal protein uS13 family. In terms of assembly, part of the 30S ribosomal subunit. Forms a loose heterodimer with protein S19. Forms two bridges to the 50S subunit in the 70S ribosome.

Located at the top of the head of the 30S subunit, it contacts several helices of the 16S rRNA. In the 70S ribosome it contacts the 23S rRNA (bridge B1a) and protein L5 of the 50S subunit (bridge B1b), connecting the 2 subunits; these bridges are implicated in subunit movement. Contacts the tRNAs in the A and P-sites. This is Small ribosomal subunit protein uS13 from Oceanobacillus iheyensis (strain DSM 14371 / CIP 107618 / JCM 11309 / KCTC 3954 / HTE831).